The chain runs to 134 residues: Large ribosomal subunit protein uL16c (134 aa).

It belongs to the universal ribosomal protein uL16 family. Part of the 50S ribosomal subunit.

The protein localises to the plastid. It is found in the chloroplast. The protein is Large ribosomal subunit protein uL16c of Atropa belladonna (Belladonna).